Here is a 156-residue protein sequence, read N- to C-terminus: SsrA-binding protein (156 aa).

It belongs to the SmpB family.

The protein resides in the cytoplasm. Its function is as follows. Required for rescue of stalled ribosomes mediated by trans-translation. Binds to transfer-messenger RNA (tmRNA), required for stable association of tmRNA with ribosomes. tmRNA and SmpB together mimic tRNA shape, replacing the anticodon stem-loop with SmpB. tmRNA is encoded by the ssrA gene; the 2 termini fold to resemble tRNA(Ala) and it encodes a 'tag peptide', a short internal open reading frame. During trans-translation Ala-aminoacylated tmRNA acts like a tRNA, entering the A-site of stalled ribosomes, displacing the stalled mRNA. The ribosome then switches to translate the ORF on the tmRNA; the nascent peptide is terminated with the 'tag peptide' encoded by the tmRNA and targeted for degradation. The ribosome is freed to recommence translation, which seems to be the essential function of trans-translation. This Clostridium beijerinckii (strain ATCC 51743 / NCIMB 8052) (Clostridium acetobutylicum) protein is SsrA-binding protein.